The following is a 158-amino-acid chain: Methylated-DNA--protein-cysteine methyltransferase (158 aa).

The active-site Nucleophile; methyl group acceptor is the C126.

The protein belongs to the MGMT family.

It is found in the cytoplasm. It catalyses the reaction a 6-O-methyl-2'-deoxyguanosine in DNA + L-cysteinyl-[protein] = S-methyl-L-cysteinyl-[protein] + a 2'-deoxyguanosine in DNA. The catalysed reaction is a 4-O-methyl-thymidine in DNA + L-cysteinyl-[protein] = a thymidine in DNA + S-methyl-L-cysteinyl-[protein]. Functionally, involved in the cellular defense against the biological effects of O6-methylguanine (O6-MeG) and O4-methylthymine (O4-MeT) in DNA. Repairs the methylated nucleobase in DNA by stoichiometrically transferring the methyl group to a cysteine residue in the enzyme. This is a suicide reaction: the enzyme is irreversibly inactivated. The polypeptide is Methylated-DNA--protein-cysteine methyltransferase (Methanosarcina mazei (strain ATCC BAA-159 / DSM 3647 / Goe1 / Go1 / JCM 11833 / OCM 88) (Methanosarcina frisia)).